The primary structure comprises 393 residues: Protein TsgA (393 aa).

The next 12 helical transmembrane spans lie at 11–31, 51–71, 78–98, 101–121, 134–154, 162–182, 206–226, 245–265, 273–293, 298–318, 332–352, and 361–381; these read WISFLSYALTGALVIVTGMVM, FLNAGILISIFLNAWLMEIIP, FGFILMVLAVAGLMFSHSLAL, AAMFVLGLVSGITMSIGTFLI, LLFTDSFFSMAGMIFPMVAAF, WYWVYACIGLVYLAIFILTFG, IGVLFLAVAALCYILGQLGFI, ALVSDFWMSYMFGMWAFSFIL, ILTVLAGIAAVLMYLFITGTQ, WFILTLGFFSSAIYTSIITLG, FILTCGTIGTMLTFVVTGPIV, and LLTANGLYAVVFVMCFALGFV.

This sequence belongs to the major facilitator superfamily. TsgA family.

It is found in the cell inner membrane. In Salmonella schwarzengrund (strain CVM19633), this protein is Protein TsgA.